The sequence spans 725 residues: N-alpha-acetyltransferase 35, NatC auxiliary subunit (725 aa).

Serine 187 is subject to Phosphoserine. Residues 548-573 (ERIMEEQQKGRSSKKTKKKKKVRPLS) form a disordered region. Over residues 558–571 (RSSKKTKKKKKVRP) the composition is skewed to basic residues.

This sequence belongs to the MAK10 family. Component of the N-terminal acetyltransferase C (NatC) complex, which is composed of NAA35, NAA38 and NAA30.

It is found in the cytoplasm. Functionally, auxillary component of the N-terminal acetyltransferase C (NatC) complex which catalyzes acetylation of N-terminal methionine residues. N-terminal acetylation protects proteins from ubiquitination and degradation by the N-end rule pathway. Involved in regulation of apoptosis and proliferation of smooth muscle cells. This Homo sapiens (Human) protein is N-alpha-acetyltransferase 35, NatC auxiliary subunit (NAA35).